Reading from the N-terminus, the 940-residue chain is Fibronectin-binding protein B (940 aa).

A signal peptide spans 1 to 36 (MKSNLRYGIRKHKLGAASVFLGTMIVVGMGQEKEAA). The disordered stretch occupies residues 36-111 (AASEQNNTTV…PKVETSRVDL (76 aa)). Residues 38 to 92 (SEQNNTTVEESGSSATESKASETQTTTNNVNTIDETQSYSATSTEQPSQSTQVTT) are compositionally biased toward polar residues. Residues 162–480 (TGTDVTNKVE…AQGDGKDKLK (319 aa)) form a fibrinogen/elastin/tropoelastin-binding region. Disordered stretches follow at residues 676–746 (LGYE…NIID), 764–878 (IIEE…GKVV), and 892–918 (VPTK…NGML). The D-1 repeat unit spans residues 681–718 (GQNSGNQSFEEDTEEDKPKYEQGGNIVDIDFDSVPQIH). The D-2 repeat unit spans residues 719–756 (GQNNGNQSFEEDTEKDKPKYEQGGNIIDIDFDSVPHIH). A D-3 repeat occupies 757 to 795 (GFNKHTEIIEEDTNKDKPNYQFGGHNSVDFEEDTLPQVS). Residues 764 to 774 (IIEEDTNKDKP) are compositionally biased toward basic and acidic residues. The span at 792-802 (PQVSGHNEGQQ) shows a compositional bias: polar residues. The D-4; truncated repeat unit spans residues 796 to 814 (GHNEGQQTIEEDTTPPIVP). The span at 811–860 (PIVPPTPPTPEVPSEPETPTPPTPEVPSEPETPTPPTPEVPTEPGKPIPP) shows a compositional bias: pro residues. WR repeat units lie at residues 815–828 (PTPP…EPET), 829–842 (PTPP…EPET), and 857–870 (PIPP…KPSK). Residues 904 to 908 (LPETG) carry the LPXTG sorting signal motif. Position 907 is a pentaglycyl murein peptidoglycan amidated threonine (Thr-907). A propeptide spans 908–940 (GGEESTNNGMLFGGLFSILGLALLRRNKKNHKA) (removed by sortase).

In terms of assembly, interacts with host PLG; this interaction provides active plasmin on the surface of bacteria cells. Interacts with host histones.

The protein localises to the secreted. Its subcellular location is the cell wall. Multifunctional protein which promotes bacterial attachment to fibrinogen, elastin and fibronectin. Also promotes the accumulation phase and the primary attachment phase of biofilm formation. In addition, protects against the antimicrobial activity of histones. Mechanistically, captures histones and prevents them from reaching the bacterial membrane and simultaneously binds plasminogen, thereby promoting its conversion to plasmin to destroy the bound histones. The polypeptide is Fibronectin-binding protein B (Staphylococcus aureus (strain USA300)).